The following is an 895-amino-acid chain: Plasma membrane ATPase 1 (895 aa).

Residues 1-53 (MSATEPTNEKVDKIVSDDEDEDIDQLVADLQSNPGAGDEEEEEENDSSFKAVP) are disordered. Topologically, residues 1–92 (MSATEPTNEK…AEEQENLVLK (92 aa)) are cytoplasmic. Positions 7–16 (TNEKVDKIVS) are enriched in basic and acidic residues. The segment covering 37–46 (GDEEEEEEND) has biased composition (acidic residues). A helical membrane pass occupies residues 93–113 (FVMFFVGPIQFVMEAAAVLAA). At 114 to 117 (GLED) the chain is on the extracellular side. The helical transmembrane segment at 118-137 (WVDFGVICALLLLNAFVGFI) threads the bilayer. The Cytoplasmic segment spans residues 138-268 (QEYQAGSIVD…GTGHFTEVLN (131 aa)). Residues 269–290 (GIGTTLLVFVIVTLLVVWVACF) traverse the membrane as a helical segment. Topologically, residues 291-301 (YRTVRIVPILR) are extracellular. A helical transmembrane segment spans residues 302–324 (YTLAITIIGVPVGLPAVVTTTMA). Over 325–696 (VGAAYLAKKQ…IAILNRSLDI (372 aa)) the chain is Cytoplasmic. The active-site 4-aspartylphosphate intermediate is the Asp-355. Residues Asp-611 and Asp-615 each contribute to the Mg(2+) site. The chain crosses the membrane as a helical span at residues 697-715 (NLIVFIAIFADVATLAIAY). The Extracellular segment spans residues 716–731 (DNAPYDPKPVKWNLPR). The helical transmembrane segment at 732–751 (LWGMSIVLGIILAIGTWITL) threads the bilayer. Topologically, residues 752–801 (TTMLLPKGGIIQNFGGLDGILFLQISLTENWLIFVTRAQGPFWSSIPSWQ) are cytoplasmic. Residues 802–822 (LSGAVLIVDIIATCFTLFGWW) traverse the membrane as a helical segment. At 823–834 (SQNWTDIVTVVR) the chain is on the extracellular side. The chain crosses the membrane as a helical span at residues 835-851 (TWIWSFGVFCVMGGAYY). Topologically, residues 852 to 895 (LMSTSEAFDNFCNGRKPQQHTDKRSLEDFLVSMQRVSTQHEKST) are cytoplasmic.

It belongs to the cation transport ATPase (P-type) (TC 3.A.3) family. Type IIIA subfamily.

The protein localises to the cell membrane. The catalysed reaction is ATP + H2O + H(+)(in) = ADP + phosphate + 2 H(+)(out). In terms of biological role, the plasma membrane ATPase of plants and fungi is a hydrogen ion pump. The proton gradient it generates drives the active transport of nutrients by H(+)-symport. The resulting external acidification and/or internal alkinization may mediate growth responses. This chain is Plasma membrane ATPase 1 (PMA1), found in Candida albicans (Yeast).